Reading from the N-terminus, the 211-residue chain is Protein GrpE (211 aa).

Over residues 1–13 (MVDKDEEQIKQNV) the composition is skewed to basic and acidic residues. A disordered region spans residues 1 to 38 (MVDKDEEQIKQNVEEDLSSTVEQTGEENIEFPSAPNHP).

Belongs to the GrpE family. As to quaternary structure, homodimer.

It is found in the cytoplasm. Functionally, participates actively in the response to hyperosmotic and heat shock by preventing the aggregation of stress-denatured proteins, in association with DnaK and GrpE. It is the nucleotide exchange factor for DnaK and may function as a thermosensor. Unfolded proteins bind initially to DnaJ; upon interaction with the DnaJ-bound protein, DnaK hydrolyzes its bound ATP, resulting in the formation of a stable complex. GrpE releases ADP from DnaK; ATP binding to DnaK triggers the release of the substrate protein, thus completing the reaction cycle. Several rounds of ATP-dependent interactions between DnaJ, DnaK and GrpE are required for fully efficient folding. The polypeptide is Protein GrpE (Protochlamydia amoebophila (strain UWE25)).